Here is a 734-residue protein sequence, read N- to C-terminus: NAD(P)H-quinone oxidoreductase subunit 5, chloroplastic (734 aa).

The next 16 helical transmembrane spans lie at 9–29 (WVIP…LFLV), 39–59 (IWAF…VHLS), 89–109 (IDPL…LVLI), 125–145 (FVYI…SNLI), 147–167 (IYFF…FWFT), 185–205 (GDFG…SLEF), 224–244 (LLTI…SAQF), 258–278 (TPIS…FLIA), 280–300 (LLPL…IGTL), 327–347 (LGYM…FHLI), 354–374 (ALLF…VGYS), 396–416 (TCFL…CFWS), 425–445 (WLYS…TAFY), 542–562 (LFPL…GIHF), 605–625 (SLAI…YSFF), and 714–734 (ISSY…FFLS).

Belongs to the complex I subunit 5 family. In terms of assembly, NDH is composed of at least 16 different subunits, 5 of which are encoded in the nucleus.

Its subcellular location is the plastid. It localises to the chloroplast thylakoid membrane. The enzyme catalyses a plastoquinone + NADH + (n+1) H(+)(in) = a plastoquinol + NAD(+) + n H(+)(out). It catalyses the reaction a plastoquinone + NADPH + (n+1) H(+)(in) = a plastoquinol + NADP(+) + n H(+)(out). In terms of biological role, NDH shuttles electrons from NAD(P)H:plastoquinone, via FMN and iron-sulfur (Fe-S) centers, to quinones in the photosynthetic chain and possibly in a chloroplast respiratory chain. The immediate electron acceptor for the enzyme in this species is believed to be plastoquinone. Couples the redox reaction to proton translocation, and thus conserves the redox energy in a proton gradient. The chain is NAD(P)H-quinone oxidoreductase subunit 5, chloroplastic (ndhF) from Oryza nivara (Indian wild rice).